Reading from the N-terminus, the 134-residue chain is ATP synthase epsilon chain (134 aa).

Basic and acidic residues predominate over residues 94–104; that stretch reads AKLAKSRAESH. The segment at 94–115 is disordered; the sequence is AKLAKSRAESHLEEDDDNTDIN.

Belongs to the ATPase epsilon chain family. As to quaternary structure, F-type ATPases have 2 components, CF(1) - the catalytic core - and CF(0) - the membrane proton channel. CF(1) has five subunits: alpha(3), beta(3), gamma(1), delta(1), epsilon(1). CF(0) has three main subunits: a, b and c.

It is found in the cell membrane. Functionally, produces ATP from ADP in the presence of a proton gradient across the membrane. This Staphylococcus epidermidis (strain ATCC 35984 / DSM 28319 / BCRC 17069 / CCUG 31568 / BM 3577 / RP62A) protein is ATP synthase epsilon chain.